The chain runs to 540 residues: Bifunctional pantoate ligase/cytidylate kinase (540 aa).

A pantoate--beta-alanine ligase region spans residues Met1–Leu280. Met28 to His35 lines the ATP pocket. His35 functions as the Proton donor in the catalytic mechanism. Gln59 contributes to the (R)-pantoate binding site. Residue Gln59 participates in beta-alanine binding. Gly150–Asp153 contributes to the ATP binding site. Gln156 is a binding site for (R)-pantoate. Residues Val179 and Tyr187–Arg190 contribute to the ATP site. Residues Leu281 to Ile540 form a cytidylate kinase region. The disordered stretch occupies residues Asp288–Arg307.

It in the N-terminal section; belongs to the pantothenate synthetase family. This sequence in the C-terminal section; belongs to the cytidylate kinase family. Type 1 subfamily.

Its subcellular location is the cytoplasm. The enzyme catalyses (R)-pantoate + beta-alanine + ATP = (R)-pantothenate + AMP + diphosphate + H(+). It carries out the reaction CMP + ATP = CDP + ADP. The catalysed reaction is dCMP + ATP = dCDP + ADP. Its pathway is cofactor biosynthesis; (R)-pantothenate biosynthesis; (R)-pantothenate from (R)-pantoate and beta-alanine: step 1/1. In terms of biological role, catalyzes the condensation of pantoate with beta-alanine in an ATP-dependent reaction via a pantoyl-adenylate intermediate. Functionally, catalyzes the transfer of a phosphate group from ATP to either CMP or dCMP to form CDP or dCDP and ADP, respectively. This is Bifunctional pantoate ligase/cytidylate kinase from Synechococcus sp. (strain JA-3-3Ab) (Cyanobacteria bacterium Yellowstone A-Prime).